A 311-amino-acid polypeptide reads, in one-letter code: Coproporphyrin III ferrochelatase 1 (311 aa).

Fe-coproporphyrin III-binding positions include Tyr-12, Arg-29, 45–46, Ser-53, and Tyr-124; that span reads RY. His-182 and Glu-263 together coordinate Fe(2+).

It belongs to the ferrochelatase family.

It is found in the cytoplasm. The catalysed reaction is Fe-coproporphyrin III + 2 H(+) = coproporphyrin III + Fe(2+). It functions in the pathway porphyrin-containing compound metabolism; protoheme biosynthesis. In terms of biological role, involved in coproporphyrin-dependent heme b biosynthesis. Catalyzes the insertion of ferrous iron into coproporphyrin III to form Fe-coproporphyrin III. This Bacillus cereus (strain ATCC 10987 / NRS 248) protein is Coproporphyrin III ferrochelatase 1.